A 113-amino-acid polypeptide reads, in one-letter code: Nucleoid-associated protein SYNW0027 (113 aa).

This sequence belongs to the YbaB/EbfC family. Homodimer.

The protein localises to the cytoplasm. It is found in the nucleoid. Functionally, binds to DNA and alters its conformation. May be involved in regulation of gene expression, nucleoid organization and DNA protection. This chain is Nucleoid-associated protein SYNW0027, found in Parasynechococcus marenigrum (strain WH8102).